A 274-amino-acid polypeptide reads, in one-letter code: MAIVKCKPTSPGRRFVVKVVNQELHKGAPHAPLLEKKSKSGGRNNNGRITTRHIGGGHKQHYRLVDFRRNDKDGIAATVERIEYDPNRTAHIALLLYADGERRYIIAPKGVSAGDQLIAGALAPIKPGNALQLRNIPVGSTVHGIELKPGKGAQIARSAGASAQLIAREGVYVTLRLRSGEMRKVLSECRATLGEVSNSEHSLRSLGKAGAKRWRGVRPTVRGVAMNPVDHPHGGGEGRTSGGRHPVSPWGFPTKGAKTRGNKRTDKMIVRRRK.

2 disordered regions span residues Ala-28 to Ile-54 and Val-224 to Lys-274. Basic and acidic residues predominate over residues Lys-263–Lys-274.

This sequence belongs to the universal ribosomal protein uL2 family. Part of the 50S ribosomal subunit. Forms a bridge to the 30S subunit in the 70S ribosome.

Its function is as follows. One of the primary rRNA binding proteins. Required for association of the 30S and 50S subunits to form the 70S ribosome, for tRNA binding and peptide bond formation. It has been suggested to have peptidyltransferase activity; this is somewhat controversial. Makes several contacts with the 16S rRNA in the 70S ribosome. This is Large ribosomal subunit protein uL2 from Pseudomonas savastanoi pv. phaseolicola (strain 1448A / Race 6) (Pseudomonas syringae pv. phaseolicola (strain 1448A / Race 6)).